Here is a 228-residue protein sequence, read N- to C-terminus: Death domain-containing membrane protein NRADD (228 aa).

The Extracellular segment spans residues 1–52; it reads MLYNVSKGVVYSDTALQGQDGDREGMWVGAGGALAPNTSSLFPPEPPGASSN. N-linked (GlcNAc...) asparagine glycans are attached at residues Asn4 and Asn37. Residues 53–73 traverse the membrane as a helical; Signal-anchor for type III membrane protein segment; the sequence is IIPVYCALLATVILGLLAYVA. Over 74-228 the chain is Cytoplasmic; the sequence is FKCWRSHKQR…SSPAESSSVV (155 aa). The disordered stretch occupies residues 87–122; it reads AKARTVELGDPDRDQRRGDSNVFVDSPPSLEPCIPS. The span at 90–105 shows a compositional bias: basic and acidic residues; that stretch reads RTVELGDPDRDQRRGD. One can recognise a Death domain in the interval 143 to 222; sequence EEVQRLLMMG…DVVQVLSSPA (80 aa).

Interacts with NGFR. Interacts with NTRK1. Interacts with SORT1. In terms of tissue distribution, detected in lung and testis.

It localises to the cell membrane. The protein resides in the nucleus. Functionally, modulates NTRK1 signaling. Can activate several intracellular signaling pathways, leading to activation of JUN. Promotes apoptosis. Promotes translocation of SORT1 to the cell membrane, and thereby hinders lysosomal degradation of SOTR1 and promotes its interaction with NGFR. In Mus musculus (Mouse), this protein is Death domain-containing membrane protein NRADD (Nradd).